A 343-amino-acid polypeptide reads, in one-letter code: MRN complex-interacting protein (343 aa).

The disordered stretch occupies residues 75–104; sequence EETVSASEEENVGHQQAGNVKQQEKSQPSE. Residues 87–104 show a composition bias toward polar residues; it reads GHQQAGNVKQQEKSQPSE. Ser100 and Ser115 each carry phosphoserine. 3 disordered regions span residues 128-178, 193-212, and 230-324; these read SKQP…WGPQ, SPCL…RGPG, and AQFV…AQNP. The Nuclear localization signal (NLS) signature appears at 148-151; sequence RKRK. A compositionally biased stretch (polar residues) spans 193-202; it reads SPCLQENSAD. Residues 213–237 are necessary for the association with the MRN complex; sequence KELWSPIQQVTATSSKWAQFVLPPR. A compositionally biased stretch (basic and acidic residues) spans 240–255; it reads SHVDSEQPRSLQRDPR.

Belongs to the MRNIP family. In terms of assembly, associates with the MRE11-RAD50-NBN (MRN) damage-sensing complex; this association is constitutive. Interacts with MRE11. Interacts with NBN. Interacts with RAD50. Post-translationally, phosphorylated; phosphorylation is constitutive and occurs in the absence of any DNA-damaging stimulus. Phosphorylation on Ser-115 is necessary for its nuclear retention.

The protein localises to the nucleus. The protein resides in the nucleoplasm. Its function is as follows. Plays a role in the cellular response to DNA damage and the maintenance of genome stability through its association with the MRN damage-sensing complex. Promotes chromatin loading and activity of the MRN complex to facilitate subsequent ATM-mediated DNA damage response signaling and DNA repair. This is MRN complex-interacting protein from Homo sapiens (Human).